A 301-amino-acid polypeptide reads, in one-letter code: Lufaxin (301 aa).

The signal sequence occupies residues 1–23 (MNSINFLSIVGLISFGFIVAVKC). Intrachain disulfides connect Cys52–Cys60, Cys78–Cys137, Cys102–Cys112, and Cys258–Cys265. A glycan (N-linked (GlcNAc...) asparagine) is linked at Asn262.

In terms of assembly, interacts with factor Xa. Associates with complement proconvertase C3b-B complex. As to expression, expressed in salivary glands.

It localises to the secreted. Sand fly salivary protein with antithrombotic, and anti-complement (alternative pathway) activities. Is a slow, tight, non-competitive, and reversible inhibitor of factor Xa (FXa, F10). Is specific for FXa (Kd=3.86 nM) and does not interact with non-activated FX, or all other enzymes tested. In addition, it blocks prothrombinase and increases both prothrombin time and activated partial thromboplastin time. It also prevents protease-activated receptor 2 (F2RL1, PAR2) activation by FXa. In vivo, it abrogates edema formation triggered by injection of FXa in the paw of mice. Moreover, it prevents FeCl(3)-induced carotid artery thrombus formation and prolongs activated partial thromboplastin time ex vivo, implying that it works as an anticoagulant in vivo. It also inhibits the early steps of the alternative pathway of complement by direct binding to the proconvertase C3b-B complex, by inhibiting activation of factor B and consequently the formation of the C3 convertase. This Lutzomyia longipalpis (Sand fly) protein is Lufaxin.